The following is a 602-amino-acid chain: Zinc finger protein 652-B (602 aa).

The disordered stretch occupies residues 60–232 (FQDSKPTNEV…PSDKAKSEEK (173 aa)). Residues 65-79 (PTNEVHAVKGERENS) are compositionally biased toward basic and acidic residues. Acidic residues-rich tracts occupy residues 80 to 108 (GESEEEEDEDDDDDDDDDDDDEEGEDEDE) and 148 to 167 (DDEGGDSGEDDQDSHEDEEN). Basic and acidic residues predominate over residues 222–232 (SPSDKAKSEEK). The segment at 235-258 (LTCDKCPRVFNTRWYLEKHMNVTH) adopts a C2H2-type 1 zinc-finger fold. The C2H2-type 2; degenerate zinc-finger motif lies at 262-284 (QICDKCGKKFVLESELSLHLQTD). 6 consecutive C2H2-type zinc fingers follow at residues 289 to 312 (IQCITCNKTFKKLWSLHEHIKIVH), 319 to 341 (FSCEICEKKFYTMAHVRKHLVAH), 347 to 369 (FTCETCGKSFKRSMSLKVHSLQH), 375 to 397 (FRCENCDERFQYKYQLRSHMSIH), 403 to 425 (FMCQWCGKDFNMKQYFDEHMKTH), and 431 to 453 (FICEICGKSFTSRPNMKRHRRTH). The C2H2-type 9; degenerate zinc finger occupies 459 to 482 (YPCDVCGMRFRFSNMLKAHKEKCF). The disordered stretch occupies residues 543–575 (PFSHLHLHPHSHTHHLAVPPVPHLPPPPALFKS). A compositionally biased stretch (basic residues) spans 545-557 (SHLHLHPHSHTHH). Residues 561 to 571 (PPVPHLPPPPA) show a composition bias toward pro residues.

It belongs to the krueppel C2H2-type zinc-finger protein family.

The protein resides in the nucleus. In terms of biological role, may be involved in transcriptional regulation. This chain is Zinc finger protein 652-B (znf652-b), found in Xenopus laevis (African clawed frog).